Consider the following 436-residue polypeptide: MSQALPLITRQGDRIAIVRGLRTPFARQATVFHGVPAVDLGKMVVGEMLARSDIPADVIEQLVFGQVVQMPEAPNIAREIVLGTGMSVHTDAYSVSRACATSFQAVANVAESLMAGTIRAGIAGGADSSSVLPIGVSKTLARTLVDANKARTLSQKLKLFSRLRPRDLLPVPPAVAEYSTGLRMGDTAEQMAKSWGITREQQDALAHRSHQLAAKAWEEGKLSAEVMTAYAPPFREPLEQDNNIRKNSTLADYQKLRPAFDRKHGTVTAANSTPLTDGAAAVILMTESRAKELGLTPLGYLRSYAFTAIDVWQDMLLGPAWSTPLALERAGLTLADLTLIDMHEAFAAQTLANLQCLASERFAREVLGRSQATGEVDESKFNVLGGSIAYGHPFAATGARMITQTLHELRRRGGGFGLVTACAAGGLGAAMIVEAE.

Residue Cys-99 is the Acyl-thioester intermediate of the active site. Residues His-392 and Cys-422 each act as proton acceptor in the active site.

It belongs to the thiolase-like superfamily. Thiolase family. Heterotetramer of two alpha chains (FadJ) and two beta chains (FadI).

It localises to the cytoplasm. The enzyme catalyses an acyl-CoA + acetyl-CoA = a 3-oxoacyl-CoA + CoA. It functions in the pathway lipid metabolism; fatty acid beta-oxidation. Its function is as follows. Catalyzes the final step of fatty acid oxidation in which acetyl-CoA is released and the CoA ester of a fatty acid two carbons shorter is formed. The polypeptide is 3-ketoacyl-CoA thiolase (Klebsiella pneumoniae (strain 342)).